The following is a 425-amino-acid chain: Ribosome biogenesis protein WDR12 homolog (425 aa).

Residues 13-94 (LQLHLITKQK…EDTVELEYVE (82 aa)) form a ubiquitin-like (UBL) domain region. WD repeat units lie at residues 106-143 (LHDDWVSAVEARDNWILTGCYDNTLNLWTTKGKHKLTI), 145-187 (GHIA…NSVE), 194-233 (GHERGVDCIAANGSKTKMATGSWDTMLKIWSTDVRSGGGD), 258-296 (GHRECISGVQWIDDNTLVTSSWDHTIKIWDLALNGIKSE), 298-337 (SGNKSFFDLSYSKLNGLIITASPDKNLRLYDPKSNQGTLV), 343-383 (GHTQ…APIF), and 387-425 (GHEDKVLACDWSNPRFILSGGSDNSVRVFKSKIAIGGEK). The segment at 227 to 247 (VRSGGGDSEPSTSKRQKLDQG) is disordered.

This sequence belongs to the WD repeat WDR12/YTM1 family.

The protein resides in the nucleus. It is found in the nucleolus. Its subcellular location is the nucleoplasm. Functionally, required for maturation of ribosomal RNAs and formation of the large ribosomal subunit. The sequence is that of Ribosome biogenesis protein WDR12 homolog from Culex quinquefasciatus (Southern house mosquito).